Reading from the N-terminus, the 360-residue chain is Pyrimidine monooxygenase RutA (360 aa).

FMN contacts are provided by residues 49–50, Asn-115, Glu-124, 140–141, and Ser-190; these read IK and RY.

It belongs to the NtaA/SnaA/DszA monooxygenase family. RutA subfamily.

It carries out the reaction uracil + FMNH2 + NADH + O2 = (Z)-3-ureidoacrylate + FMN + NAD(+) + H2O + H(+). It catalyses the reaction thymine + FMNH2 + NADH + O2 = (Z)-2-methylureidoacrylate + FMN + NAD(+) + H2O + H(+). Catalyzes the pyrimidine ring opening between N-3 and C-4 by an unusual flavin hydroperoxide-catalyzed mechanism, adding oxygen atoms in the process to yield ureidoacrylate peracid, that immediately reacts with FMN forming ureidoacrylate and FMN-N(5)-oxide. The FMN-N(5)-oxide reacts spontaneously with NADH to produce FMN. Requires the flavin reductase RutF to regenerate FMN in vivo. This is Pyrimidine monooxygenase RutA from Bradyrhizobium sp. (strain BTAi1 / ATCC BAA-1182).